Reading from the N-terminus, the 1545-residue chain is Tricalbin-3 (1545 aa).

Positions 1 to 89 (MTGIKAQVHP…SNPEGKKQSS (89 aa)) are disordered. The Cytoplasmic portion of the chain corresponds to 1–206 (MTGIKAQVHP…AYILENFYND (206 aa)). The span at 62–80 (TKTSNSVSDVSKGQKTADS) shows a compositional bias: polar residues. Phosphoserine is present on residues Ser-67 and Ser-112. Residues 207 to 227 (WYCNIATVLGTCFFSWLFAYI) traverse the membrane as a helical segment. A topological domain (extracellular) is located at residue Gly-228. The chain crosses the membrane as a helical span at residues 229–249 (FSWWSMIFIFLGTATVYNAEY). The Cytoplasmic segment spans residues 250–1545 (TRFNRNIRDD…VPEVPQEYTQ (1296 aa)). In terms of domain architecture, SMP-LTD spans 272-479 (RVESTTWLNS…PPNHLDINVE (208 aa)). One can recognise a C2 1 domain in the interval 470 to 596 (PPNHLDINVE…LQNPVLDNQT (127 aa)). Residues 620–660 (EDKSEEKAVERAEAKAKGKKEDENEDTTEKEEDENEESSQT) are a coiled coil. Basic and acidic residues predominate over residues 624-641 (EEKAVERAEAKAKGKKED). The disordered stretch occupies residues 624 to 660 (EEKAVERAEAKAKGKKEDENEDTTEKEEDENEESSQT). A compositionally biased stretch (acidic residues) spans 642–658 (ENEDTTEKEEDENEESS). 2 consecutive C2 domains span residues 646–763 (TTEK…AQEF) and 783–897 (MTGA…SGKY). The stretch at 937–972 (SPEELVNVEKLEKELKEKKKKFEATQEENEQEMEKN) forms a coiled coil. Positions 1119–1234 (PTSVKLPSSE…EVGKTYNWNL (116 aa)) constitute a C2 4 domain. Asp-1150, Asp-1156, Asp-1204, Asp-1206, and Asp-1212 together coordinate Ca(2+). Positions 1304-1404 (LLKSLGGNPM…NSRGHSRASS (101 aa)) are disordered. The span at 1318–1328 (SSNGNESNGAK) shows a compositional bias: polar residues. Over residues 1329-1340 (KSSEKKSFDRRS) the composition is skewed to basic and acidic residues. Ser-1340, Ser-1342, and Ser-1346 each carry phosphoserine. Polar residues predominate over residues 1341–1351 (PSNLNSTSVTP). At Thr-1350 the chain carries Phosphothreonine. Ser-1354 carries the phosphoserine modification. The span at 1361 to 1373 (VPNTSYAPVQSAS) shows a compositional bias: polar residues. The span at 1377–1404 (KPTDNTSSSSNKKDTPSSNSRGHSRASS) shows a compositional bias: low complexity. The region spanning 1396 to 1514 (SRGHSRASSF…QQDGQISVKL (119 aa)) is the C2 5 domain. A Phosphoserine modification is found at Ser-1400.

This sequence belongs to the tricalbin family. Interacts with TCB2 via its C-terminal domain. It depends on Ca(2+) as a cofactor.

It localises to the cell membrane. Its subcellular location is the endoplasmic reticulum membrane. May play a role in membrane trafficking. The polypeptide is Tricalbin-3 (TCB3) (Saccharomyces cerevisiae (strain ATCC 204508 / S288c) (Baker's yeast)).